Consider the following 105-residue polypeptide: MRGGGNMQQMMKQMQKMQKKMGEEQEKLKEEKVQGTAGGGMVTVTVSGHKEVLDVEIKEEAVDPDDIEMLQDLVIAATNEAMNKADELTQERLGKHTQGLNIPGM.

The disordered stretch occupies residues 1-41 (MRGGGNMQQMMKQMQKMQKKMGEEQEKLKEEKVQGTAGGGM). Positions 7–16 (MQQMMKQMQK) are enriched in low complexity. Residues 20 to 33 (KMGEEQEKLKEEKV) show a composition bias toward basic and acidic residues.

It belongs to the YbaB/EbfC family. In terms of assembly, homodimer.

Its subcellular location is the cytoplasm. The protein resides in the nucleoid. In terms of biological role, binds to DNA and alters its conformation. May be involved in regulation of gene expression, nucleoid organization and DNA protection. In Staphylococcus saprophyticus subsp. saprophyticus (strain ATCC 15305 / DSM 20229 / NCIMB 8711 / NCTC 7292 / S-41), this protein is Nucleoid-associated protein SSP2277.